The following is a 388-amino-acid chain: Chaperone protein DnaJ 1 (388 aa).

A J domain is found at 10–74; it reads DFYKELGVSS…VKRKEYDETR (65 aa). The CR-type zinc-finger motif lies at 159-237; it reads GVAMPLRLTS…CKGTGVTTRT (79 aa). The Zn(2+) site is built by C172, C175, C189, C192, C211, C214, C225, and C228. CXXCXGXG motif repeat units follow at residues 172-179, 189-196, 211-218, and 225-232; these read CTNCHGSG, CSTCNGSG, CTECRGSG, and CEECKGTG.

This sequence belongs to the DnaJ family. As to quaternary structure, homodimer. Zn(2+) is required as a cofactor.

Its subcellular location is the cytoplasm. Functionally, participates actively in the response to hyperosmotic and heat shock by preventing the aggregation of stress-denatured proteins and by disaggregating proteins, also in an autonomous, DnaK-independent fashion. Unfolded proteins bind initially to DnaJ; upon interaction with the DnaJ-bound protein, DnaK hydrolyzes its bound ATP, resulting in the formation of a stable complex. GrpE releases ADP from DnaK; ATP binding to DnaK triggers the release of the substrate protein, thus completing the reaction cycle. Several rounds of ATP-dependent interactions between DnaJ, DnaK and GrpE are required for fully efficient folding. Also involved, together with DnaK and GrpE, in the DNA replication of plasmids through activation of initiation proteins. This chain is Chaperone protein DnaJ 1, found in Mycobacterium leprae (strain TN).